Consider the following 541-residue polypeptide: AT-rich interactive domain-containing protein 3A (541 aa).

The interval 17–172 (RLQQELEARQ…KHPNPQAFPT (156 aa)) is disordered. Positions 55–73 (LKIQRAQAAALAAMRAAAA) are enriched in low complexity. Acidic residues predominate over residues 84 to 102 (SDEEEEDGESMASDEEDEK). Over residues 103-112 (ERDGESERYP) the composition is skewed to basic and acidic residues. Positions 115 to 144 (GSEEEDLKGKWDEDDFEDEGEEDDYEDMEE) are enriched in acidic residues. The ARID domain maps to 212 to 304 (DPKRKEFLDD…YLYPYECEKR (93 aa)). In terms of domain architecture, REKLES spans 407–501 (AALEQLREKL…GVLFAQPPTS (95 aa)). An important for nuclear localization region spans residues 408–450 (ALEQLREKLESGEPPEKKMALGTEEQQRLQRAIQHNLLAMTAQ). The segment at 452-473 (PMNIRINSQAEGRQDSAVNLTT) is homodimerization. Residues 497–504 (QPPTSASG) form an important for cytoplasmic localization region. Positions 499-541 (PTSASGTSKGSSNRTGSIGGGSSTSQAAPPPAPSAPTSNNPSP) are disordered.

Homodimer.

It localises to the nucleus. The protein resides in the cytoplasm. Its function is as follows. Transcription factor required for smad1 and smad2-mediated responses to TGFbeta during mesoderm induction. This Xenopus tropicalis (Western clawed frog) protein is AT-rich interactive domain-containing protein 3A (arid3a).